The following is a 217-amino-acid chain: Large ribosomal subunit protein uL3 (217 aa).

Glutamine 152 carries the post-translational modification N5-methylglutamine.

It belongs to the universal ribosomal protein uL3 family. As to quaternary structure, part of the 50S ribosomal subunit. Forms a cluster with proteins L14 and L19. Post-translationally, methylated by PrmB.

Its function is as follows. One of the primary rRNA binding proteins, it binds directly near the 3'-end of the 23S rRNA, where it nucleates assembly of the 50S subunit. The protein is Large ribosomal subunit protein uL3 of Blochmanniella pennsylvanica (strain BPEN).